The sequence spans 186 residues: Probable RNA 2'-phosphotransferase (186 aa).

It belongs to the KptA/TPT1 family.

Functionally, removes the 2'-phosphate from RNA via an intermediate in which the phosphate is ADP-ribosylated by NAD followed by a presumed transesterification to release the RNA and generate ADP-ribose 1''-2''-cyclic phosphate (APPR&gt;P). May function as an ADP-ribosylase. The chain is Probable RNA 2'-phosphotransferase from Pectobacterium carotovorum subsp. carotovorum (strain PC1).